The primary structure comprises 347 residues: Cell shape-determining protein MreB (347 aa).

ATP contacts are provided by residues 19–21 (TAN), 165–167 (GGT), 213–216 (ERIK), and 295–298 (GGAL).

The protein belongs to the FtsA/MreB family. Forms polymers in the presence of ATP. Forms pairs of protofilaments that adopt an antiparallel arrangement and bind to lipids.

It localises to the cytoplasm. Functionally, forms membrane-associated dynamic filaments that are essential for cell shape determination. Acts by regulating cell wall synthesis and cell elongation, and thus cell shape. A feedback loop between cell geometry and MreB localization may maintain elongated cell shape by targeting cell wall growth to regions of negative cell wall curvature. Required for mid-cell peptidoglycan synthesis and cell division. Directs the localization of the cytosolic peptidoglycan precursor-synthesizing enzyme MurG. Also required for proper chromosome segregation. Directs the segregation of origin-proximal but not origin-distal loci. This is Cell shape-determining protein MreB from Caulobacter vibrioides (strain NA1000 / CB15N) (Caulobacter crescentus).